A 283-amino-acid chain; its full sequence is Cuticle collagen 49 (283 aa).

A signal peptide spans M1–C19. Residues E90–A283 form a disordered region. Residues V127–I139 are compositionally biased toward basic and acidic residues. A compositionally biased stretch (pro residues) spans A143 to L155. Low complexity predominate over residues Q185–G204. One can recognise a Collagen-like domain in the interval G213–E271. Basic and acidic residues predominate over residues R244–D257.

This sequence belongs to the cuticular collagen family. In terms of assembly, collagen polypeptide chains are complexed within the cuticle by disulfide bonds and other types of covalent cross-links.

Probable cuticular collagen-like protein. Nematode cuticles are composed largely of collagen-like proteins. The cuticle functions both as an exoskeleton and as a barrier to protect the worm from its environment. Acts downstream of the Wnt signaling pathway, perhaps in the formation of the adult cuticle. In Caenorhabditis elegans, this protein is Cuticle collagen 49.